The sequence spans 258 residues: MVLIRVLANLLILQLSYAQKSSELVIGGDECNINEHRSLVAFFNSTGFFCSGTLINEEWVLTAAHCDNTNFQMKLGVHSKKVLNEDEQTRNPKEKFICPNKKNDEVLDKDIMLIKLDSRVSNSEHIVPLSLPSSPPSVGSVCHIMGWGSITPIKVTYPDVPYCAYINLLDDAVCQAGYPELLTEYRTLCAGILEGGKDTCGGDSGGPLICNGQFQGIVSFGAHPCGQGLKPGVYTKVFDYNHWIQSIIAGNTTVTCPQ.

The signal sequence occupies residues Met-1–Ala-18. Positions Gln-19–Leu-24 are excised as a propeptide. Residues Val-25–Ala-249 form the Peptidase S1 domain. Cystine bridges form between Cys-31-Cys-163, Cys-50-Cys-66, Cys-98-Cys-256, Cys-142-Cys-210, Cys-174-Cys-189, and Cys-200-Cys-225. Asn-44 carries N-linked (GlcNAc...) asparagine glycosylation. Catalysis depends on charge relay system residues His-65 and Asp-110. Ser-204 functions as the Charge relay system in the catalytic mechanism. An N-linked (GlcNAc...) asparagine glycan is attached at Asn-251.

The protein belongs to the peptidase S1 family. Snake venom subfamily. Monomer. As to expression, expressed by the venom gland.

It localises to the secreted. Its function is as follows. Thrombin-like snake venom serine protease that shows strong blood coagulation activity in vitro. The chain is Thrombin-like enzyme saxthrombin from Gloydius intermedius (Central Asian pit viper).